Consider the following 257-residue polypeptide: Zinc uptake system ATP-binding protein ZurA (257 aa).

In terms of domain architecture, ABC transporter spans 5–241 (IEVNNVSYHY…ADRELEILAE (237 aa)). 37–44 (GPNGSGKS) is a binding site for ATP.

It belongs to the ABC transporter superfamily.

Its function is as follows. Involved in a zinc uptake transport system. This chain is Zinc uptake system ATP-binding protein ZurA (zurA), found in Listeria innocua serovar 6a (strain ATCC BAA-680 / CLIP 11262).